The primary structure comprises 588 residues: Serine/threonine-protein phosphatase 2A 65 kDa regulatory subunit A alpha isoform (588 aa).

HEAT repeat units follow at residues 2 to 42, 44 to 80, 81 to 119, 158 to 196, 197 to 235, 236 to 274, 275 to 313, 315 to 352, 353 to 391, 393 to 430, 432 to 469, 470 to 508, 509 to 547, and 549 to 586; these read AMVD…ALGE, RTRK…FVGG, IEFA…QMKE, DVLK…TVES, TFLI…LLEP, QDCV…AVGP, DCTR…LLNP, LAIQ…ILGK, DSTI…VIGI, LLSQ…QLGI, FFDD…EFGP, EWAM…VMGS, EITC…IVDQ, and VVDK…STAA.

Belongs to the phosphatase 2A regulatory subunit A family. PP2A consists of a common heterodimeric core enzyme, composed of a 36 kDa catalytic subunit (subunit C) and a 65 kDa constant regulatory subunit (subunit A), that associates with a variety of regulatory subunits such as subunits B (the R2/B/PR55/B55, R3/B''/PR72/PR130/PR59 and R5/B'/B56 families) and the regulatory subunits TON2. Interacts with CYP20-1/ROC7. Also interacts with phosphatidic acid (PA), a lipid signaling molecule. Interacts with CHIP. Interacts with SIC/RON3. In terms of processing, ubiquitinated. CHIP-mediated ubiquitination enhances phosphatase activity after an abiotic stress such as low temperature or darkness. As to expression, mostly expressed in cell-dividing tissues such as apical meristems. Ubiquitous, with higher levels in roots and flowers (at protein level).

Its subcellular location is the cytoplasm. The protein resides in the cytosol. The protein localises to the nucleus. The A subunit of protein phosphatase 2A serves as a scaffolding molecule to coordinate the assembly of the catalytic subunit and a variable regulatory B subunit. Seems to act as a positive regulator of PP2A catalytic activity. Confers resistance to phosphatase inhibitors such as okadaic acid and cantharidin. Involved during developmental process such as seedling and floral developments, root gravitropism, and stomatal opening regulation. Involved in the regulation of auxin efflux, especially during basipetal (tips to base) auxin transport in roots, and appears to contribute to the perception of auxin efflux inhibitors such as 1-N-naphthylphthalamic acid (NPA) and to semicarbazone I (substituted phenylsemicarbazone of 2-acetylarylcarboxylic acids) (SCB-I). Modulates the magnitude of ethylene response in the hypocotyl and stem, and functions as a general positive transducer of early ABA signaling. The holoenzyme composed of PP2AA1, PP2A4 and B'ZETA or B'ETA acts as a negative regulator of plant innate immunity by controlling BAK1 phosphorylation state and activation in surface-localized immune receptor complexes. This Arabidopsis thaliana (Mouse-ear cress) protein is Serine/threonine-protein phosphatase 2A 65 kDa regulatory subunit A alpha isoform (PP2AA1).